Reading from the N-terminus, the 320-residue chain is Annexin A5 (320 aa).

The residue at position 2 (alanine 2) is an N-acetylalanine. Annexin repeat units follow at residues 15-86 (FDER…ALMK), 87-158 (PSRL…VLLQ), 170-242 (AQVE…AVVK), and 246-317 (SIPA…LLCG). Lysine 29 participates in a covalent cross-link: Glycyl lysine isopeptide (Lys-Gly) (interchain with G-Cter in SUMO1); alternate. Residue lysine 29 forms a Glycyl lysine isopeptide (Lys-Gly) (interchain with G-Cter in SUMO2); alternate linkage. The residue at position 37 (serine 37) is a Phosphoserine. N6-acetyllysine occurs at positions 70, 76, 79, 97, and 101. Position 290 is an N6-succinyllysine (lysine 290). Residues 314–319 (LLCGED) carry the [IL]-x-C-x-x-[DE] motif motif.

Belongs to the annexin family. Monomer. Binds ATRX and EIF5B. Interacts with hepatitis B virus (HBV). S-nitrosylation is induced by interferon-gamma and oxidatively-modified low-densitity lipoprotein (LDL(ox)) possibly implicating the iNOS-S100A8/9 transnitrosylase complex.

Its function is as follows. This protein is an anticoagulant protein that acts as an indirect inhibitor of the thromboplastin-specific complex, which is involved in the blood coagulation cascade. The polypeptide is Annexin A5 (ANXA5) (Homo sapiens (Human)).